A 400-amino-acid polypeptide reads, in one-letter code: Aspartate/prephenate aminotransferase (400 aa).

Residues Gly-39, Trp-125, and Asn-175 each coordinate L-aspartate. Lys-239 carries the post-translational modification N6-(pyridoxal phosphate)lysine. Residue Arg-375 coordinates L-aspartate.

It belongs to the class-I pyridoxal-phosphate-dependent aminotransferase family. Homodimer. Requires pyridoxal 5'-phosphate as cofactor.

The protein localises to the cytoplasm. It carries out the reaction L-aspartate + 2-oxoglutarate = oxaloacetate + L-glutamate. It catalyses the reaction L-arogenate + 2-oxoglutarate = prephenate + L-glutamate. Catalyzes the reversible conversion of aspartate and 2-oxoglutarate to glutamate and oxaloacetate. Can also transaminate prephenate in the presence of glutamate. Required for symbiotic nitrogen fixation. This chain is Aspartate/prephenate aminotransferase, found in Rhizobium meliloti (strain 1021) (Ensifer meliloti).